A 160-amino-acid polypeptide reads, in one-letter code: Probable chemoreceptor glutamine deamidase CheD 1 (160 aa).

It belongs to the CheD family.

The catalysed reaction is L-glutaminyl-[protein] + H2O = L-glutamyl-[protein] + NH4(+). Its function is as follows. Probably deamidates glutamine residues to glutamate on methyl-accepting chemotaxis receptors (MCPs), playing an important role in chemotaxis. This Syntrophus aciditrophicus (strain SB) protein is Probable chemoreceptor glutamine deamidase CheD 1.